The sequence spans 95 residues: Aspartyl/glutamyl-tRNA(Asn/Gln) amidotransferase subunit C (95 aa).

Belongs to the GatC family. As to quaternary structure, heterotrimer of A, B and C subunits.

The enzyme catalyses L-glutamyl-tRNA(Gln) + L-glutamine + ATP + H2O = L-glutaminyl-tRNA(Gln) + L-glutamate + ADP + phosphate + H(+). The catalysed reaction is L-aspartyl-tRNA(Asn) + L-glutamine + ATP + H2O = L-asparaginyl-tRNA(Asn) + L-glutamate + ADP + phosphate + 2 H(+). In terms of biological role, allows the formation of correctly charged Asn-tRNA(Asn) or Gln-tRNA(Gln) through the transamidation of misacylated Asp-tRNA(Asn) or Glu-tRNA(Gln) in organisms which lack either or both of asparaginyl-tRNA or glutaminyl-tRNA synthetases. The reaction takes place in the presence of glutamine and ATP through an activated phospho-Asp-tRNA(Asn) or phospho-Glu-tRNA(Gln). The polypeptide is Aspartyl/glutamyl-tRNA(Asn/Gln) amidotransferase subunit C (Rhodopseudomonas palustris (strain ATCC BAA-98 / CGA009)).